A 514-amino-acid polypeptide reads, in one-letter code: Cytochrome P450 87A3 (514 aa).

The next 2 membrane-spanning stretches (helical) occupy residues 36–56 (ASSM…VALL) and 315–335 (LMFV…TIGV). C463 is a heme binding site.

The protein belongs to the cytochrome P450 family. It depends on heme as a cofactor. Expressed in roots and coleoptiles, but not in leaves.

It is found in the cytoplasmic vesicle membrane. The chain is Cytochrome P450 87A3 (CYP87A3) from Oryza sativa subsp. japonica (Rice).